A 141-amino-acid polypeptide reads, in one-letter code: Protein MGF 100-2L (141 aa).

It belongs to the asfivirus MGF 100 family.

Plays a role in virus cell tropism, and may be required for efficient virus replication in macrophages. The sequence is that of Protein MGF 100-2L from African swine fever virus (isolate Pig/Kenya/KEN-50/1950) (ASFV).